A 339-amino-acid chain; its full sequence is Putative agmatine deiminase (339 aa).

C331 acts as the Amidino-cysteine intermediate in catalysis.

The protein belongs to the agmatine deiminase family.

The catalysed reaction is agmatine + H2O = N-carbamoylputrescine + NH4(+). In Streptomyces coelicolor (strain ATCC BAA-471 / A3(2) / M145), this protein is Putative agmatine deiminase.